The chain runs to 185 residues: Transmembrane protein 140 (185 aa).

The Cytoplasmic portion of the chain corresponds to 1–11; that stretch reads MAGPRPRWRDQ. Residues 12-32 form a helical membrane-spanning segment; the sequence is LLFMSIIVLVIVVICLMFYAL. Topologically, residues 33-77 are extracellular; that stretch reads LWEAGNLTDLPNLRIGFYNFCLWNEDTSTLQCHQFPELEALGVPR. An N-linked (GlcNAc...) asparagine glycan is attached at Asn38. The helical transmembrane segment at 78-98 threads the bilayer; sequence VGLGLARLGVYGSLVLTLFAP. At 99–114 the chain is on the cytoplasmic side; the sequence is QPLLLAQCNSDERAWR. The helical transmembrane segment at 115–135 threads the bilayer; the sequence is LAVGFLAVSSVLLAGGLGLFL. Over 136–150 the chain is Extracellular; sequence SYVWKWVRLSLPGPG. The chain crosses the membrane as a helical span at residues 151–171; sequence FLALGSAQALLILLLIAMAVF. At 172 to 185 the chain is on the cytoplasmic side; sequence PLRAERAESKLESC.

As to expression, expression significantly higher in gliomas than in normal brain tissues.

The protein localises to the membrane. In Homo sapiens (Human), this protein is Transmembrane protein 140 (TMEM140).